We begin with the raw amino-acid sequence, 1134 residues long: Centrosomal protein of 131 kDa (1134 aa).

Disordered stretches follow at residues 111-131 (NSSESDYSLHKRTPDSSEEGE), 168-208 (DLPG…PLTL), 286-306 (ESSKQVEPTSPTPTLPKAPSS), 425-455 (VGKKKENVKPASADPIARSSKSKVTKSTINP), and 492-528 (DQKQYDGKHKPGLEDLDEAQDNDTASQLSLKSNEDSR). Positions 180 to 196 (MHADLDSSDCDNDKQEV) are enriched in basic and acidic residues. A compositionally biased stretch (basic and acidic residues) spans 494 to 504 (KQYDGKHKPGL). Residues 513–522 (NDTASQLSLK) show a composition bias toward polar residues. Residues 732–1131 (LESQNQAWEH…AVIRQQRKDY (400 aa)) are a coiled coil.

This sequence belongs to the CEP131 family. As to expression, expressed in chordotonal (Ch) neuronal precursors. Expressed in ciliated cells, like sensory neurons and spermatids.

The protein resides in the cytoplasm. The protein localises to the cytoskeleton. It is found in the microtubule organizing center. It localises to the centrosome. Its subcellular location is the cilium basal body. The protein resides in the centriole. In terms of biological role, cilium-specific protein with a role in cilium/flagellum formation. May be involved in transport of components into the growing cilium. In germ cells and sensory neurons, plays a role with Cby in the building of the transition zone necessary for the formation of the ciliary cap and for the correct elongation of the axoneme. The protein is Centrosomal protein of 131 kDa of Drosophila melanogaster (Fruit fly).